A 157-amino-acid chain; its full sequence is S-ribosylhomocysteine lyase (157 aa).

Fe cation-binding residues include His54, His58, and Cys126.

It belongs to the LuxS family. As to quaternary structure, homodimer. Fe cation is required as a cofactor.

It catalyses the reaction S-(5-deoxy-D-ribos-5-yl)-L-homocysteine = (S)-4,5-dihydroxypentane-2,3-dione + L-homocysteine. Functionally, involved in the synthesis of autoinducer 2 (AI-2) which is secreted by bacteria and is used to communicate both the cell density and the metabolic potential of the environment. The regulation of gene expression in response to changes in cell density is called quorum sensing. Catalyzes the transformation of S-ribosylhomocysteine (RHC) to homocysteine (HC) and 4,5-dihydroxy-2,3-pentadione (DPD). The polypeptide is S-ribosylhomocysteine lyase (Bacillus pumilus (strain SAFR-032)).